Consider the following 351-residue polypeptide: Epoxyqueuosine reductase (351 aa).

Asp131 functions as the Proton donor in the catalytic mechanism. A 4Fe-4S ferredoxin-type domain is found at 177–205 (EDQPVDYGCGSCTRCVDFCPTKALLGDGR). The [4Fe-4S] cluster site is built by Cys185, Cys188, Cys191, Cys195, Cys211, Cys237, Cys240, and Cys244.

Belongs to the QueG family. As to quaternary structure, monomer. Cob(II)alamin serves as cofactor. The cofactor is [4Fe-4S] cluster.

Its subcellular location is the cytoplasm. It carries out the reaction epoxyqueuosine(34) in tRNA + AH2 = queuosine(34) in tRNA + A + H2O. Its pathway is tRNA modification; tRNA-queuosine biosynthesis. Functionally, catalyzes the conversion of epoxyqueuosine (oQ) to queuosine (Q), which is a hypermodified base found in the wobble positions of tRNA(Asp), tRNA(Asn), tRNA(His) and tRNA(Tyr). The protein is Epoxyqueuosine reductase of Lactococcus garvieae (strain Lg2) (Enterococcus seriolicida).